The sequence spans 451 residues: Phosphoglucosamine mutase (451 aa).

Residue S103 is the Phosphoserine intermediate of the active site. The Mg(2+) site is built by S103, D243, D245, and D247. S103 is modified (phosphoserine).

This sequence belongs to the phosphohexose mutase family. Mg(2+) serves as cofactor. Activated by phosphorylation.

The enzyme catalyses alpha-D-glucosamine 1-phosphate = D-glucosamine 6-phosphate. In terms of biological role, catalyzes the conversion of glucosamine-6-phosphate to glucosamine-1-phosphate. This is Phosphoglucosamine mutase from Levilactobacillus brevis (strain ATCC 367 / BCRC 12310 / CIP 105137 / JCM 1170 / LMG 11437 / NCIMB 947 / NCTC 947) (Lactobacillus brevis).